The primary structure comprises 70 residues: UPF0150 protein TM_1311 (70 aa).

This sequence belongs to the UPF0150 family.

In Thermotoga maritima (strain ATCC 43589 / DSM 3109 / JCM 10099 / NBRC 100826 / MSB8), this protein is UPF0150 protein TM_1311.